We begin with the raw amino-acid sequence, 740 residues long: NAD(P)H-quinone oxidoreductase subunit 5, chloroplastic (740 aa).

A run of 17 helical transmembrane segments spans residues 9 to 29, 40 to 60, 89 to 109, 125 to 145, 147 to 167, 185 to 205, 219 to 239, 258 to 278, 290 to 310, 327 to 347, 354 to 374, 396 to 416, 425 to 445, 521 to 538, 545 to 565, 599 to 619, and 720 to 740; these read WIIPFIPLPVTVLVGLGLLVV, WAFISVLLLSIALLFSINISI, IDSLTSIMLILITTVGIMVLI, FAYLNFFNASMLGLVTSSNLI, IYIFWELVGMCSYLLIGFWFT, GDFGLLLGILGLYWITGSFEF, NTINLFFAALCASLLFLGAIA, TPISALIHAATMVAAGIFLVA, IMYFISLIGIITVLLGATLAL, LGYIMLAMGIGSYRAALFHLI, ALLFLGSGSIIHSMEPIVGYS, TTFLLGTLSLCGIPPLACFWS, WLYSPIFAIIAYSTAGLTAFY, MFSFSIFFGNEIVFPYPH, LLSVCVLGLFTLFVGFIGIPL, FVINAIFSVSIALFGIFIASF, and YLFVYLSYVSVFLVVIYYFVL.

It belongs to the complex I subunit 5 family. As to quaternary structure, NDH is composed of at least 16 different subunits, 5 of which are encoded in the nucleus.

It localises to the plastid. The protein resides in the chloroplast thylakoid membrane. The catalysed reaction is a plastoquinone + NADH + (n+1) H(+)(in) = a plastoquinol + NAD(+) + n H(+)(out). It catalyses the reaction a plastoquinone + NADPH + (n+1) H(+)(in) = a plastoquinol + NADP(+) + n H(+)(out). In terms of biological role, NDH shuttles electrons from NAD(P)H:plastoquinone, via FMN and iron-sulfur (Fe-S) centers, to quinones in the photosynthetic chain and possibly in a chloroplast respiratory chain. The immediate electron acceptor for the enzyme in this species is believed to be plastoquinone. Couples the redox reaction to proton translocation, and thus conserves the redox energy in a proton gradient. In Piper cenocladum (Ant piper), this protein is NAD(P)H-quinone oxidoreductase subunit 5, chloroplastic (ndhF).